Reading from the N-terminus, the 190-residue chain is Frizzled-6 (190 aa).

In terms of domain architecture, FZ spans 1–20; it reads FGFAWPEELECSRLVNCDET. Topologically, residues 1-89 are extracellular; the sequence is FGFAWPEELE…NYELDVAKSF (89 aa). Residues 90 to 110 form a helical membrane-spanning segment; the sequence is IGIVSIFCLCATLFTFLTFLI. Topologically, residues 111–121 are cytoplasmic; it reads DVKRFRYPERP. The helical transmembrane segment at 122–142 threads the bilayer; the sequence is IIYYSVCYSIVSLMYFIGFLL. Residues 143–169 lie on the Extracellular side of the membrane; the sequence is GNRTACNKADDKLEIGETVVLGSQNKA. Asn-144 is a glycosylation site (N-linked (GlcNAc...) asparagine). A helical membrane pass occupies residues 170 to 190; the sequence is CTVLFMVLYFFTMAGTIWWVI.

The protein belongs to the G-protein coupled receptor Fz/Smo family.

It is found in the membrane. Its subcellular location is the cell membrane. The protein resides in the cell surface. The protein localises to the apical cell membrane. It localises to the cytoplasmic vesicle membrane. Its function is as follows. Receptor for Wnt proteins. Most of frizzled receptors are coupled to the beta-catenin canonical signaling pathway, which leads to the activation of disheveled proteins, inhibition of GSK-3 kinase, nuclear accumulation of beta-catenin and activation of Wnt target genes. A second signaling pathway involving PKC and calcium fluxes has been seen for some family members, but it is not yet clear if it represents a distinct pathway or if it can be integrated in the canonical pathway, as PKC seems to be required for Wnt-mediated inactivation of GSK-3 kinase. Both pathways seem to involve interactions with G-proteins. Activation by Wnt5A stimulates PKC activity via a G-protein-dependent mechanism. Involved in transduction and intercellular transmission of polarity information during tissue morphogenesis and/or in differentiated tissues. Together with FZD3, may be involved in the neural tube closure and plays a role in the regulation of the establishment of planar cell polarity (PCP), particularly in the orientation of asymmetric bundles of stereocilia on the apical faces of a subset of auditory and vestibular sensory cells located in the inner ear. The chain is Frizzled-6 (FZD6) from Gallus gallus (Chicken).